The chain runs to 114 residues: Transcription initiation factor IIA subunit 2 (114 aa).

The protein belongs to the TFIIA subunit 2 family. As to quaternary structure, TFIIA is a heterodimer composed of the large toa1 and the small toa2 subunits.

It is found in the nucleus. Functionally, TFIIA is a component of the transcription machinery of RNA polymerase II and plays an important role in transcriptional activation. TFIIA in a complex with tbp mediates transcriptional activity. The polypeptide is Transcription initiation factor IIA subunit 2 (toa2) (Fusarium vanettenii (strain ATCC MYA-4622 / CBS 123669 / FGSC 9596 / NRRL 45880 / 77-13-4) (Fusarium solani subsp. pisi)).